Reading from the N-terminus, the 252-residue chain is Ribosomal RNA small subunit methyltransferase J (252 aa).

S-adenosyl-L-methionine-binding positions include 101–102 (RD), 117–118 (ER), 153–154 (SS), and Asp-171.

The protein belongs to the methyltransferase superfamily. RsmJ family.

The protein localises to the cytoplasm. The catalysed reaction is guanosine(1516) in 16S rRNA + S-adenosyl-L-methionine = N(2)-methylguanosine(1516) in 16S rRNA + S-adenosyl-L-homocysteine + H(+). In terms of biological role, specifically methylates the guanosine in position 1516 of 16S rRNA. The sequence is that of Ribosomal RNA small subunit methyltransferase J from Salmonella schwarzengrund (strain CVM19633).